Consider the following 87-residue polypeptide: Putative outer membrane protein ArbH (87 aa).

The signal sequence occupies residues 1 to 23 (MKIKNSYLVIASLLYPISFISTA).

Belongs to the porin LamB (TC 1.B.3) family.

The protein resides in the cell outer membrane. Its function is as follows. May be a sugar porin with a broad carbohydrate specificity. In Dickeya chrysanthemi (Pectobacterium chrysanthemi), this protein is Putative outer membrane protein ArbH (arbH).